We begin with the raw amino-acid sequence, 148 residues long: NPC intracellular cholesterol transporter 2 homolog a (148 aa).

Residues 1–16 (MLRYAVIACAALVVFA) form the signal peptide. Disulfide bonds link C24–C140, C39–C46, and C92–C99. N-linked (GlcNAc...) asparagine glycosylation occurs at N51.

Belongs to the NPC2 family. In terms of tissue distribution, broadly expressed with a higher level of expression in many tissues, including midgut, salivary gland and ventral nerve cord.

It is found in the secreted. Its function is as follows. Functions redundantly with Npc2b in regulating sterol homeostasis and ecdysteroid biosynthesis, probably by controlling the availability of sterol substrate. The polypeptide is NPC intracellular cholesterol transporter 2 homolog a (Drosophila melanogaster (Fruit fly)).